The chain runs to 307 residues: Small ribosomal subunit protein uS5m (307 aa).

The transit peptide at 1-13 (MFKRQLSTSVRYL) directs the protein to the mitochondrion. The S5 DRBM domain maps to 144–208 (LTMKPLVMKR…WDAVRNLKEI (65 aa)).

It belongs to the universal ribosomal protein uS5 family. As to quaternary structure, component of the mitochondrial small ribosomal subunit (mt-SSU). Mature yeast 74S mitochondrial ribosomes consist of a small (37S) and a large (54S) subunit. The 37S small subunit contains a 15S ribosomal RNA (15S mt-rRNA) and 34 different proteins. The 54S large subunit contains a 21S rRNA (21S mt-rRNA) and 46 different proteins. uS3m, uS4m and uS5m form the narrow entry site of the mRNA channel.

It localises to the mitochondrion. Component of the mitochondrial ribosome (mitoribosome), a dedicated translation machinery responsible for the synthesis of mitochondrial genome-encoded proteins, including at least some of the essential transmembrane subunits of the mitochondrial respiratory chain. The mitoribosomes are attached to the mitochondrial inner membrane and translation products are cotranslationally integrated into the membrane. The sequence is that of Small ribosomal subunit protein uS5m (MRPS5) from Saccharomyces cerevisiae (strain ATCC 204508 / S288c) (Baker's yeast).